The primary structure comprises 331 residues: UPF0324 membrane protein SA0329 (331 aa).

The next 11 helical transmembrane spans lie at 9–26, 31–48, 69–88, 93–115, 122–144, 154–176, 183–202, 217–234, 247–269, 273–295, and 308–330; these read FMIGLSLTFIVALFSFLA, ILDKVGALTIAILIAILY, LLRFAIILYGLKLNIFDIIG, LLAIDVGVVIFSIVMMLFVNKLL, ALLLGVGTGVCGAAAIAAVAPIF, SIGIIALIGTIFSLIYTAIYAIF, YGAWSGVSLHEIAHVVLAGG, LGRVFLLIPLTIVLILIM, ISIPYFLIGFVIMALVNTYVTIP, LNILNTISTICLLMAMVALGLNV, and LMTIIITSICLSSLAFIVVHWLY.

The protein belongs to the UPF0324 family.

It is found in the cell membrane. In Staphylococcus aureus (strain N315), this protein is UPF0324 membrane protein SA0329.